The primary structure comprises 92 residues: Serine protease inhibitor I/II (92 aa).

Residues 1-19 (MKLALALCAAFLLVVLVQA) form the signal peptide. Pacifastin domains are found at residues 20 to 54 (EQEC…CPPH) and 57 to 92 (EVTC…CPQK). Intrachain disulfides connect Cys23–Cys38, Cys33–Cys51, Cys36–Cys46, Cys60–Cys75, Cys70–Cys89, and Cys73–Cys84.

This sequence belongs to the protease inhibitor I19 family. Expressed in hemolymph, ovaries, testes and fat body of adults but are absent in the gut. Also present in larval hemolymph and fat body.

It is found in the secreted. Functionally, in vitro, is active against alpha-chymotrypsin and trypsin. In terms of biological role, in vitro, is active against alpha-chymotrypsin and pancreatic elastase. The polypeptide is Serine protease inhibitor I/II (Schistocerca gregaria (Desert locust)).